A 623-amino-acid polypeptide reads, in one-letter code: Zinc finger protein 143 (623 aa).

7 consecutive C2H2-type zinc fingers follow at residues phenylalanine 230 to histidine 254, tyrosine 260 to histidine 284, tyrosine 290 to histidine 314, phenylalanine 320 to histidine 344, tyrosine 350 to histidine 374, tyrosine 380 to histidine 404, and tyrosine 410 to histidine 433.

The protein belongs to the GLI C2H2-type zinc-finger protein family.

Its subcellular location is the nucleus. Transcriptional activator. Activates the gene for selenocysteine tRNA (tRNAsec). Binds to the activator element (AE) motif of the selenocysteine tRNA gene promoter. The protein is Zinc finger protein 143 (znf143) of Danio rerio (Zebrafish).